A 271-amino-acid polypeptide reads, in one-letter code: Hydroxyethylthiazole kinase (271 aa).

Residue Met50 coordinates substrate. The ATP site is built by Arg126 and Thr172. Gly199 serves as a coordination point for substrate.

Belongs to the Thz kinase family. Mg(2+) serves as cofactor.

It catalyses the reaction 5-(2-hydroxyethyl)-4-methylthiazole + ATP = 4-methyl-5-(2-phosphooxyethyl)-thiazole + ADP + H(+). The protein operates within cofactor biosynthesis; thiamine diphosphate biosynthesis; 4-methyl-5-(2-phosphoethyl)-thiazole from 5-(2-hydroxyethyl)-4-methylthiazole: step 1/1. Functionally, catalyzes the phosphorylation of the hydroxyl group of 4-methyl-5-beta-hydroxyethylthiazole (THZ). This chain is Hydroxyethylthiazole kinase, found in Akkermansia muciniphila (strain ATCC BAA-835 / DSM 22959 / JCM 33894 / BCRC 81048 / CCUG 64013 / CIP 107961 / Muc).